The chain runs to 148 residues: Caltractin (148 aa).

4 EF-hand domains span residues 4–39 (EQKQ…LGFE), 40–75 (PKKE…KMGE), 77–112 (DSRE…LGEN), and 113–148 (LTDE…TSLF). 10 residues coordinate Ca(2+): Asp-17, Asp-19, Ser-21, Thr-23, Glu-28, Asp-53, Asp-55, Ser-57, Thr-59, and Glu-64. The Ca(2+) site is built by Asp-126, Asp-128, Asp-130, Glu-132, and Glu-137.

Belongs to the centrin family. Ubiquitous.

This calcium-binding protein is found in the basal body complexes (the functional homolog of the centrosome in animal cell). In mitotic cells it is specifically associated with the poles of the mitotic spindles at the sites of the duplicated basal body complexes. In Spermatozopsis similis (Green alga), this protein is Caltractin.